Here is a 157-residue protein sequence, read N- to C-terminus: MLPEQGPQPSTMPLWCLLAACTSLPRQAATMLEEAASPNEAVHASTSGSGALTDQTFTDLSAAEASSEEVPDFMEVPHSVHHKINCFFYLEKQLCQLPSPLCLSSLLTLKLKTTVPAPGRWWSFQPHKAFPLLVGTPGSWQSTIDPAWAAPSQPSPG.

An N-terminal signal peptide occupies residues 1–30 (MLPEQGPQPSTMPLWCLLAACTSLPRQAAT).

The protein resides in the secreted. This is an uncharacterized protein from Homo sapiens (Human).